A 130-amino-acid polypeptide reads, in one-letter code: Small ribosomal subunit protein uS9 (130 aa).

The protein belongs to the universal ribosomal protein uS9 family.

This is Small ribosomal subunit protein uS9 from Streptococcus gordonii (strain Challis / ATCC 35105 / BCRC 15272 / CH1 / DL1 / V288).